A 355-amino-acid chain; its full sequence is Putative L-lysine 2,3-aminomutase (355 aa).

A Radical SAM core domain is found at 93-308; the sequence is VHQYANRVLM…KERLSGLSLP (216 aa). Cys-108, Cys-112, and Cys-115 together coordinate [4Fe-4S] cluster. Lys-320 carries the N6-(pyridoxal phosphate)lysine modification.

Belongs to the radical SAM superfamily. KamA family. It depends on [4Fe-4S] cluster as a cofactor. Pyridoxal 5'-phosphate is required as a cofactor.

The polypeptide is Putative L-lysine 2,3-aminomutase (Treponema pallidum (strain Nichols)).